Reading from the N-terminus, the 201-residue chain is MAKIALILGSVRSPRVGNDVTGWVHDVLKSRPSDDLQIEPLVIADFNLPVYDEPVMPAMVPAMKQFTKEHSKRWSAAIASYQGYIFVIPEYNGGIAGGTKNAVDYLYNEWPGKPVAIISYGTQGGNRANAQLSESLELVMKMKVAPTKVLLPFAAGTDVFSAINDGVLGEESQKAWAEAGKKEDILKALDEVKELLKQPKE.

Residues Arg-12, 90–93 (EYNG), and Tyr-120 each bind FMN.

In terms of assembly, homodimer.

It catalyses the reaction FMNH2 + NADP(+) = FMN + NADPH + 2 H(+). It carries out the reaction FMNH2 + NAD(+) = FMN + NADH + 2 H(+). The protein operates within secondary metabolite biosynthesis; terpenoid biosynthesis. Functionally, NAD(P)H-dependent FMN reductase; part of the gene cluster that mediates the biosynthesis of the meroterpenoids nectripenoids A and B, as well as cochliquninone D and isocochliquninone E. The pathway probably begins with the HR-PKS ntnH that catalyzes two chain-extension steps to form a reduced triketide, which then primes the SAT domain in the NR-PKS ntnG to initiate three more cycles of extension to give a linear hexaketide corresponding to the polyketide part of nectripenoids. The FAD-dependent monooxygenase ntnJ then performs an oxidative decarboxylation at C11 of the ntnH/ntnG product, via an electrophilic aromatic hydroxylation with concomitant ipso-decarboxylation. The membrane-bound polyprenyl transferase ntnF then introduces a farnesyl group before the FAD-dependent monooxygenase ntnK functions as the first epoxidase on terminal C12'-C13' olefin, followed by a second epoxidation on C7'-C8' catalyzed by ntnA. The terpene cyclase/mutase ntnI then initiates the sequential tricyclic ring formation through protonation of the terminal epoxide and catalyzes the regioselective and stereoselective 6/6/6-tricyclic ring formation. The cytochrome P450 monooxygenase ntnM may then hydroxylate C1'. This chain is NAD(P)H-dependent FMN reductase ntnL, found in Nectria sp.